Here is a 377-residue protein sequence, read N- to C-terminus: Lactosylceramide 1,3-N-acetyl-beta-D-glucosaminyltransferase (377 aa).

Over 1–14 the chain is Cytoplasmic; that stretch reads MRVFVSSRRVKRWQ. The chain crosses the membrane as a helical; Signal-anchor for type II membrane protein span at residues 15–35; sequence FFHLFAICFILSFMVFWGPIN. Residues 36–377 lie on the Lumenal side of the membrane; that stretch reads NYIMSHMKSY…NSYPCRAAFA (342 aa). Asparagine 58 is a glycosylation site (N-linked (GlcNAc...) asparagine).

The protein belongs to the glycosyltransferase 31 family.

It localises to the golgi apparatus membrane. The enzyme catalyses a beta-D-Gal-(1-&gt;4)-beta-D-Glc-(1&lt;-&gt;1)-Cer(d18:1(4E)) + UDP-N-acetyl-alpha-D-glucosamine = a beta-D-GlcNAc-(1-&gt;3)-beta-D-Gal-(1-&gt;4)-beta-D-Glc-(1&lt;-&gt;1)-Cer(d18:1(4E)) + UDP + H(+). The catalysed reaction is a neolactoside nLc4Cer(d18:1(4E)) + UDP-N-acetyl-alpha-D-glucosamine = a neolactoside IV(3)-beta-GlcNAc-nLc4Cer(d18:1(4E)) + UDP + H(+). Its pathway is protein modification; protein glycosylation. In terms of biological role, beta-1,3-N-acetylglucosaminyltransferase that plays a key role in the synthesis of lacto- or neolacto-series carbohydrate chains on glycolipids, notably by participating in biosynthesis of HNK-1 and Lewis X carbohydrate structures. Has strong activity toward lactosylceramide (LacCer) and neolactotetraosylceramide (nLc(4)Cer; paragloboside), resulting in the synthesis of Lc(3)Cer and neolactopentaosylceramide (nLc(5)Cer), respectively. Probably plays a central role in regulating neolacto-series glycolipid synthesis during embryonic development. This is Lactosylceramide 1,3-N-acetyl-beta-D-glucosaminyltransferase from Rattus norvegicus (Rat).